The primary structure comprises 420 residues: 4-hydroxy-3-methylbut-2-en-1-yl diphosphate synthase (flavodoxin) (420 aa).

The [4Fe-4S] cluster site is built by Cys307, Cys310, Cys353, and Glu360.

Belongs to the IspG family. [4Fe-4S] cluster is required as a cofactor.

It carries out the reaction (2E)-4-hydroxy-3-methylbut-2-enyl diphosphate + oxidized [flavodoxin] + H2O + 2 H(+) = 2-C-methyl-D-erythritol 2,4-cyclic diphosphate + reduced [flavodoxin]. The protein operates within isoprenoid biosynthesis; isopentenyl diphosphate biosynthesis via DXP pathway; isopentenyl diphosphate from 1-deoxy-D-xylulose 5-phosphate: step 5/6. Its function is as follows. Converts 2C-methyl-D-erythritol 2,4-cyclodiphosphate (ME-2,4cPP) into 1-hydroxy-2-methyl-2-(E)-butenyl 4-diphosphate. The protein is 4-hydroxy-3-methylbut-2-en-1-yl diphosphate synthase (flavodoxin) of Brucella suis biovar 1 (strain 1330).